Here is a 107-residue protein sequence, read N- to C-terminus: MVAPKIRIKLRGFDHKALDQSASKIVDTVRRTGADVSGPVPLPTRIRRFCVLRSPFKYKDAREHFEIRTHNRLVDIMNPTKKTIDSLMTLDLPTGVDIEIKTVGGRA.

It belongs to the universal ribosomal protein uS10 family. Part of the 30S ribosomal subunit.

Its function is as follows. Involved in the binding of tRNA to the ribosomes. In Deinococcus deserti (strain DSM 17065 / CIP 109153 / LMG 22923 / VCD115), this protein is Small ribosomal subunit protein uS10.